Consider the following 252-residue polypeptide: MVAAAAATGILSLCGSPALADSHADGAATNSPGAVSGNALQVPVDVPVNACGNTVDVIAALNPAFGNECENASDEKTDGHGGGYGEDASSSSSSSTSASSSGSHADGATEGSPGVGSGNNAQVPVDVPVNLCGNTVDVIAALNPVFGNKCENDAEEPPGYGEEEPPPPTTPPGYGEEEPPPPTHEEPPPPSGEEEPPPPSEEEHTPPAPQTEQPPALAETGSEGTLGAAAAGAVLIAGGAILYRRGRALSGR.

The signal sequence occupies residues 1–20; the sequence is MVAAAAATGILSLCGSPALA. One can recognise a Chaplin 1 domain in the interval 31-71; the sequence is SPGAVSGNALQVPVDVPVNACGNTVDVIAALNPAFGNECEN. 2 disordered regions span residues 71–121 and 150–224; these read NASD…GNNA and CEND…GSEG. Low complexity predominate over residues 86–108; it reads EDASSSSSSSTSASSSGSHADGA. A Chaplin 2 domain is found at 112–152; sequence SPGVGSGNNAQVPVDVPVNLCGNTVDVIAALNPVFGNKCEN. A compositionally biased stretch (acidic residues) spans 153–165; it reads DAEEPPGYGEEEP. Over residues 210–224 the composition is skewed to low complexity; the sequence is QTEQPPALAETGSEG. Residues 217-221 carry the LPXTG sorting signal motif; the sequence is LAETG. 2 propeptides (removed by sortase) span residues 219 to 252 and 221 to 252; these read ETGS…LSGR and GSEG…LSGR. Residue Thr-220 is modified to Pentaglycyl murein peptidoglycan amidated threonine.

The protein belongs to the chaplin family. Long chaplin subfamily.

It localises to the secreted. The protein localises to the cell wall. One of 8 partially redundant surface-active proteins required for efficient formation of aerial mycelium; the short chaplins assemble into a hydrophobic, amyloidal fibrillar surface layer that envelopes and protects aerial hyphae and spores, presumably anchored to the long chaplins. Chaplins have an overlapping function with the surface-active SapB peptide; chaplins are essential on minimal medium while on rich medium both chaplins and SapB are required for efficient aerial hyphae formation. A minimal chaplin strain capable of forming aerial mycelium/hyphae on minimal medium contains ChpC, ChpE and ChpH. The strain also has restored rodlet formation on the hyphae surface. A second minimal chaplin strain with ChpA, ChpD and ChpE makes slightly less robust hyphae. The long chaplins (ChpA, ChpB, ChpC) are not absolutely necessary for short chaplin localization or rodlet formation, but probably play a role in initiating aerial hyphae development. Chaplins are also involved in cell attachment to a hydrophobic surface. The protein is Chaplin-A of Streptomyces coelicolor (strain ATCC BAA-471 / A3(2) / M145).